A 429-amino-acid chain; its full sequence is 4-hydroxy-3-methylbut-2-en-1-yl diphosphate synthase (flavodoxin) (429 aa).

4 residues coordinate [4Fe-4S] cluster: Cys323, Cys326, Cys369, and Glu376.

Belongs to the IspG family. [4Fe-4S] cluster is required as a cofactor.

It carries out the reaction (2E)-4-hydroxy-3-methylbut-2-enyl diphosphate + oxidized [flavodoxin] + H2O + 2 H(+) = 2-C-methyl-D-erythritol 2,4-cyclic diphosphate + reduced [flavodoxin]. Its pathway is isoprenoid biosynthesis; isopentenyl diphosphate biosynthesis via DXP pathway; isopentenyl diphosphate from 1-deoxy-D-xylulose 5-phosphate: step 5/6. Functionally, converts 2C-methyl-D-erythritol 2,4-cyclodiphosphate (ME-2,4cPP) into 1-hydroxy-2-methyl-2-(E)-butenyl 4-diphosphate. This chain is 4-hydroxy-3-methylbut-2-en-1-yl diphosphate synthase (flavodoxin), found in Wolbachia sp. subsp. Brugia malayi (strain TRS).